Consider the following 613-residue polypeptide: Protein ECM3 (613 aa).

The next 4 membrane-spanning stretches (helical) occupy residues Ile10 to Leu30, Gly74 to Val94, Gly106 to Gln126, and Val143 to Phe163. Residues Asp177 to Ser256 form a disordered region. Composition is skewed to polar residues over residues Ser187 to Asp206 and Glu213 to Ser226. Phosphoserine is present on residues Ser291 and Ser338. Residues Arg345 to Ile366 are disordered. The next 4 membrane-spanning stretches (helical) occupy residues Met432–Thr452, Phe471–Leu491, Met546–Phe566, and Phe587–Ile607.

The protein localises to the endoplasmic reticulum membrane. Its function is as follows. May be involved in cell wall organization and biogenesis. The chain is Protein ECM3 (ECM3) from Saccharomyces cerevisiae (strain ATCC 204508 / S288c) (Baker's yeast).